The sequence spans 261 residues: uncharacterized protein (261 aa).

A run of 3 helical transmembrane segments spans residues 15–35 (WYSVGLIFFSFIPIYYSIIVC), 87–107 (VYLIVLYIILIIHFGFEIRNA), and 131–151 (LLLYFQNLLLLPYICGGYFLI). Residues 234-246 (LEEKKAKRRQNAE) show a composition bias toward basic and acidic residues. A disordered region spans residues 234–261 (LEEKKAKRRQNAERRKKRREIAMEQREQ).

Its subcellular location is the membrane. This is an uncharacterized protein from Caenorhabditis elegans.